The primary structure comprises 274 residues: Mitogen-activated protein kinase 4 (274 aa).

Residues 1 to 8 (GCGGNGLV) and Lys-23 contribute to the ATP site. In terms of domain architecture, Protein kinase spans 1–274 (GCGGNGLVLS…KILTFSPMDR (274 aa)). Asp-123 (proton acceptor) is an active-site residue. Ser-160 bears the Phosphoserine mark. An SEG motif motif is present at residues 160-162 (SEG).

The protein belongs to the protein kinase superfamily. CMGC Ser/Thr protein kinase family. MAP kinase subfamily. Homodimer. Heterodimer with ERK3/MAPK6. Interacts with MAPKAPK5. It depends on Mg(2+) as a cofactor. Phosphorylated by PAK1, PAK2 and PAK3 in the activation loop resulting in catalytic activation. Phosphorylated by MAPKAPK5 at other sites. As to expression, exclusively detected in the brain, where expression is restricted to the choroid plexus and hippocampus, and to a lesser extent in lung.

It is found in the cytoplasm. The protein resides in the nucleus. It catalyses the reaction L-seryl-[protein] + ATP = O-phospho-L-seryl-[protein] + ADP + H(+). It carries out the reaction L-threonyl-[protein] + ATP = O-phospho-L-threonyl-[protein] + ADP + H(+). Activated by phosphorylation in the activation loop. In terms of biological role, atypical MAPK protein. Phosphorylates microtubule-associated protein 2 (MAP2) and MAPKAPK5. The precise role of the complex formed with MAPKAPK5 is still unclear, but the complex follows a complex set of phosphorylation events: upon interaction with atypical MAPKAPK5, ERK4/MAPK4 is phosphorylated and then mediates phosphorylation and activation of MAPKAPK5, which in turn phosphorylates ERK4/MAPK4. May promote entry in the cell cycle. The protein is Mitogen-activated protein kinase 4 (Mapk4) of Rattus norvegicus (Rat).